The primary structure comprises 260 residues: Cytochrome c oxidase subunit 2 (260 aa).

Topologically, residues 1 to 41 are mitochondrial intermembrane; it reads MIVREWLFFTMAPCDAAEPWQLGFQDAATPMMQGIIDLHHD. Residues 42–58 form a helical membrane-spanning segment; that stretch reads IFFFLILILVFVSWILV. Over 59–82 the chain is Mitochondrial matrix; the sequence is RALWHFHYKKNPIPQRIVHGTTIE. Residues 83–104 form a helical membrane-spanning segment; sequence IIRTIFPSIILMFIAIPSFALL. Residues 105-260 are Mitochondrial intermembrane-facing; it reads YSMDEVVVDP…NQLIPQTGEA (156 aa). 6 residues coordinate Cu cation: His-187, Cys-222, Glu-224, Cys-226, His-230, and Met-233. Glu-224 is a Mg(2+) binding site.

The protein belongs to the cytochrome c oxidase subunit 2 family. Component of the cytochrome c oxidase (complex IV, CIV), a multisubunit enzyme composed of a catalytic core of 3 subunits and several supernumerary subunits. The complex exists as a monomer or a dimer and forms supercomplexes (SCs) in the inner mitochondrial membrane with ubiquinol-cytochrome c oxidoreductase (cytochrome b-c1 complex, complex III, CIII). Cu cation serves as cofactor.

The protein localises to the mitochondrion inner membrane. The enzyme catalyses 4 Fe(II)-[cytochrome c] + O2 + 8 H(+)(in) = 4 Fe(III)-[cytochrome c] + 2 H2O + 4 H(+)(out). Component of the cytochrome c oxidase, the last enzyme in the mitochondrial electron transport chain which drives oxidative phosphorylation. The respiratory chain contains 3 multisubunit complexes succinate dehydrogenase (complex II, CII), ubiquinol-cytochrome c oxidoreductase (cytochrome b-c1 complex, complex III, CIII) and cytochrome c oxidase (complex IV, CIV), that cooperate to transfer electrons derived from NADH and succinate to molecular oxygen, creating an electrochemical gradient over the inner membrane that drives transmembrane transport and the ATP synthase. Cytochrome c oxidase is the component of the respiratory chain that catalyzes the reduction of oxygen to water. Electrons originating from reduced cytochrome c in the intermembrane space (IMS) are transferred via the dinuclear copper A center (CU(A)) of subunit 2 and heme A of subunit 1 to the active site in subunit 1, a binuclear center (BNC) formed by heme A3 and copper B (CU(B)). The BNC reduces molecular oxygen to 2 water molecules using 4 electrons from cytochrome c in the IMS and 4 protons from the mitochondrial matrix. This chain is Cytochrome c oxidase subunit 2 (COX2), found in Beta vulgaris (Sugar beet).